A 171-amino-acid polypeptide reads, in one-letter code: MEKANSFTKEQLIACGQGELLGANSPKLPIDNMLMVDRIVRINEDGGAFGKGEIIAELDINPTLWFFDCHFKGDPVMPGCLGLDAMWQLVGFYLGWEGAQGKGRALGVGEVKFTGQVLPDAKKVTYKLNIKRKIHRKLVMGIADATMEVDGREIYSATDLKVGIFSDTSTF.

H70 is a catalytic residue.

The protein belongs to the thioester dehydratase family. FabA subfamily. As to quaternary structure, homodimer.

The protein localises to the cytoplasm. It catalyses the reaction a (3R)-hydroxyacyl-[ACP] = a (2E)-enoyl-[ACP] + H2O. The catalysed reaction is (3R)-hydroxydecanoyl-[ACP] = (2E)-decenoyl-[ACP] + H2O. The enzyme catalyses (2E)-decenoyl-[ACP] = (3Z)-decenoyl-[ACP]. Its pathway is lipid metabolism; fatty acid biosynthesis. Necessary for the introduction of cis unsaturation into fatty acids. Catalyzes the dehydration of (3R)-3-hydroxydecanoyl-ACP to E-(2)-decenoyl-ACP and then its isomerization to Z-(3)-decenoyl-ACP. Can catalyze the dehydratase reaction for beta-hydroxyacyl-ACPs with saturated chain lengths up to 16:0, being most active on intermediate chain length. The protein is 3-hydroxydecanoyl-[acyl-carrier-protein] dehydratase of Shewanella denitrificans (strain OS217 / ATCC BAA-1090 / DSM 15013).